The sequence spans 222 residues: Eukaryotic translation initiation factor 3 subunit K (222 aa).

The PCI domain occupies 46-208 (YDLEANLAVL…KIKTKNITEK (163 aa)).

It belongs to the eIF-3 subunit K family. In terms of assembly, component of the eukaryotic translation initiation factor 3 (eIF-3) complex. The eIF-3 complex interacts with pix.

The protein resides in the cytoplasm. Component of the eukaryotic translation initiation factor 3 (eIF-3) complex, which is involved in protein synthesis of a specialized repertoire of mRNAs and, together with other initiation factors, stimulates binding of mRNA and methionyl-tRNAi to the 40S ribosome. The eIF-3 complex specifically targets and initiates translation of a subset of mRNAs involved in cell proliferation. This Drosophila virilis (Fruit fly) protein is Eukaryotic translation initiation factor 3 subunit K.